The following is a 185-amino-acid chain: Adenine phosphoribosyltransferase (185 aa).

It belongs to the purine/pyrimidine phosphoribosyltransferase family. As to quaternary structure, homodimer.

It is found in the cytoplasm. The catalysed reaction is AMP + diphosphate = 5-phospho-alpha-D-ribose 1-diphosphate + adenine. It participates in purine metabolism; AMP biosynthesis via salvage pathway; AMP from adenine: step 1/1. Its function is as follows. Catalyzes a salvage reaction resulting in the formation of AMP, that is energically less costly than de novo synthesis. This Pectobacterium carotovorum subsp. carotovorum (strain PC1) protein is Adenine phosphoribosyltransferase.